The sequence spans 155 residues: Endoribonuclease YbeY (155 aa).

Residues His-114, His-118, and His-124 each coordinate Zn(2+).

Belongs to the endoribonuclease YbeY family. Zn(2+) is required as a cofactor.

The protein resides in the cytoplasm. Functionally, single strand-specific metallo-endoribonuclease involved in late-stage 70S ribosome quality control and in maturation of the 3' terminus of the 16S rRNA. The sequence is that of Endoribonuclease YbeY from Enterobacter sp. (strain 638).